The primary structure comprises 31 residues: Nemertide alpha-5 (31 aa).

3 disulfides stabilise this stretch: C2–C16, C9–C20, and C15–C26. 2 positions are modified to 4-hydroxyproline: P28 and P29.

This sequence belongs to the nemertide family. Confined to the epidermis and to the mucus layer.

The protein resides in the secreted. Functionally, highly potent toxin against both insect and some mammalian sodium channels (Nav). It potently inhibits inactivation of insect sodium channels of B.germanica (BgNav1) (EC(50)=7.8 nM) and also delays the inactivation of mammalian Nav with potent activity on Nav1.3/SCN3A and Nav1.4/SCN4A (hNav1.1/SCN1A; EC(50)=102.1 nM, rNav1.2/SCN2A; EC(50)=156.1 nM, rNav1.3/SCN3A; EC(50)=9.4 nM, rNav1.4/SCN4A; EC(50)=15.4 nM, hNav1.5/SCN5A; EC(50)=132.7 nM, mNav1.6/SCN8A; EC(50)=66.9 nM, hNav1.9/SCN9A; EC(50)=73 nM). 1 uM is enough to completely inhibits the inactivation, resulting in sustained non-inactivating currents. In addition, the toxin significantly enhances the recovery from inactivation, and the open state is not required for the toxin to interact with the channel. In vivo, injection into brine shrimp (Artemia salina) stops movement or causes death after 24 hours (EC(50)=0.4 uM). The polypeptide is Nemertide alpha-5 (Ramphogordius pseudolacteus (Ribbon worm)).